The chain runs to 213 residues: Imidazole glycerol phosphate synthase subunit HisH 1 (213 aa).

Positions 3-213 (SVSIVDYGVG…LSIIQQFLQI (211 aa)) constitute a Glutamine amidotransferase type-1 domain. Catalysis depends on Cys-81, which acts as the Nucleophile. Catalysis depends on residues His-195 and Glu-197.

Heterodimer of HisH and HisF.

The protein resides in the cytoplasm. It carries out the reaction 5-[(5-phospho-1-deoxy-D-ribulos-1-ylimino)methylamino]-1-(5-phospho-beta-D-ribosyl)imidazole-4-carboxamide + L-glutamine = D-erythro-1-(imidazol-4-yl)glycerol 3-phosphate + 5-amino-1-(5-phospho-beta-D-ribosyl)imidazole-4-carboxamide + L-glutamate + H(+). It catalyses the reaction L-glutamine + H2O = L-glutamate + NH4(+). Its pathway is amino-acid biosynthesis; L-histidine biosynthesis; L-histidine from 5-phospho-alpha-D-ribose 1-diphosphate: step 5/9. Functionally, IGPS catalyzes the conversion of PRFAR and glutamine to IGP, AICAR and glutamate. The HisH subunit provides the glutamine amidotransferase activity that produces the ammonia necessary to HisF for the synthesis of IGP and AICAR. This is Imidazole glycerol phosphate synthase subunit HisH 1 from Legionella pneumophila (strain Paris).